We begin with the raw amino-acid sequence, 498 residues long: Putative antiporter subunit mnhD2 (498 aa).

The next 14 membrane-spanning stretches (helical) occupy residues 2–22 (LSNL…ILVF), 32–52 (YLYL…LIYV), 78–98 (LSLI…AYGF), 108–128 (YHLP…FLTS), 130–150 (LFNL…LITL), 161–181 (IIYV…IGLL), 209–229 (ISLI…FMWL), 240–260 (LAAL…IRFF), 271–291 (IHPL…IGVI), 308–328 (IGFI…GAIF), 330–350 (LVND…LVYI), 368–388 (FFGV…PFSG), 403–423 (GNYI…YSLF), and 450–470 (GILS…PVLL).

The protein belongs to the CPA3 antiporters (TC 2.A.63) subunit D family. As to quaternary structure, may form a heterooligomeric complex that consists of seven subunits: mnhA2, mnhB2, mnhC2, mnhD2, mnhE2, mnhF2 and mnhG2.

The protein resides in the cell membrane. The protein is Putative antiporter subunit mnhD2 (mnhD2) of Staphylococcus aureus (strain MRSA252).